The primary structure comprises 367 residues: Acryloyl-CoA reductase electron transfer subunit beta (367 aa).

Residue 305 to 333 coordinates FAD; that stretch reads VYVALGISGAIQHKAGMQDSELIIAVNKD.

In terms of assembly, heterohexadecamer; tetramer of tetramers. Each tetramer is composed of 2 alpha (AcrC), a beta (AcrA) and a gamma (AcrB) subunit.

It is found in the cytoplasm. In terms of biological role, part of the ETF-acryloyl-CoA reductase complex involved in the pathway of L-alanine fermentation. The electron transfer flavoprotein (ETF) serves as a specific electron acceptor for acryloyl-CoA reductase. This chain is Acryloyl-CoA reductase electron transfer subunit beta (acrA), found in Anaerotignum propionicum (Clostridium propionicum).